The following is a 114-amino-acid chain: Large ribosomal subunit protein bL21c (114 aa).

Belongs to the bacterial ribosomal protein bL21 family. Part of the 50S ribosomal subunit.

The protein localises to the plastid. The protein resides in the chloroplast. Its function is as follows. This protein binds to 23S rRNA. The chain is Large ribosomal subunit protein bL21c from Staurastrum punctulatum (Green alga).